A 364-amino-acid chain; its full sequence is Aminomethyltransferase (364 aa).

Belongs to the GcvT family. As to quaternary structure, the glycine cleavage system is composed of four proteins: P, T, L and H.

The enzyme catalyses N(6)-[(R)-S(8)-aminomethyldihydrolipoyl]-L-lysyl-[protein] + (6S)-5,6,7,8-tetrahydrofolate = N(6)-[(R)-dihydrolipoyl]-L-lysyl-[protein] + (6R)-5,10-methylene-5,6,7,8-tetrahydrofolate + NH4(+). The glycine cleavage system catalyzes the degradation of glycine. This chain is Aminomethyltransferase, found in Enterobacter sp. (strain 638).